The sequence spans 421 residues: Imidazolonepropionase (421 aa).

The Fe(3+) site is built by histidine 81 and histidine 83. Histidine 81 and histidine 83 together coordinate Zn(2+). 3 residues coordinate 4-imidazolone-5-propanoate: arginine 90, tyrosine 153, and histidine 186. An N-formimidoyl-L-glutamate-binding site is contributed by tyrosine 153. Histidine 251 contacts Fe(3+). Histidine 251 is a binding site for Zn(2+). Glutamate 254 contributes to the 4-imidazolone-5-propanoate binding site. Aspartate 326 serves as a coordination point for Fe(3+). Aspartate 326 is a Zn(2+) binding site. N-formimidoyl-L-glutamate-binding residues include asparagine 328 and glycine 330. Serine 331 serves as a coordination point for 4-imidazolone-5-propanoate.

This sequence belongs to the metallo-dependent hydrolases superfamily. HutI family. It depends on Zn(2+) as a cofactor. Fe(3+) serves as cofactor.

Its subcellular location is the cytoplasm. The catalysed reaction is 4-imidazolone-5-propanoate + H2O = N-formimidoyl-L-glutamate. The protein operates within amino-acid degradation; L-histidine degradation into L-glutamate; N-formimidoyl-L-glutamate from L-histidine: step 3/3. In terms of biological role, catalyzes the hydrolytic cleavage of the carbon-nitrogen bond in imidazolone-5-propanoate to yield N-formimidoyl-L-glutamate. It is the third step in the universal histidine degradation pathway. The protein is Imidazolonepropionase of Streptococcus pyogenes serotype M2 (strain MGAS10270).